Consider the following 136-residue polypeptide: Large ribosomal subunit protein bL17 (136 aa).

The protein belongs to the bacterial ribosomal protein bL17 family. Part of the 50S ribosomal subunit. Contacts protein L32.

The chain is Large ribosomal subunit protein bL17 from Methylobacterium radiotolerans (strain ATCC 27329 / DSM 1819 / JCM 2831 / NBRC 15690 / NCIMB 10815 / 0-1).